The chain runs to 894 residues: DNA mismatch repair protein MutS (894 aa).

G607–S614 contacts ATP.

Belongs to the DNA mismatch repair MutS family.

This protein is involved in the repair of mismatches in DNA. It is possible that it carries out the mismatch recognition step. This protein has a weak ATPase activity. In Bacillus cereus (strain ZK / E33L), this protein is DNA mismatch repair protein MutS.